The primary structure comprises 409 residues: NADH-quinone oxidoreductase subunit D (409 aa).

Belongs to the complex I 49 kDa subunit family. In terms of assembly, NDH-1 is composed of 14 different subunits. Subunits NuoB, C, D, E, F, and G constitute the peripheral sector of the complex.

The protein localises to the cell inner membrane. It carries out the reaction a quinone + NADH + 5 H(+)(in) = a quinol + NAD(+) + 4 H(+)(out). Functionally, NDH-1 shuttles electrons from NADH, via FMN and iron-sulfur (Fe-S) centers, to quinones in the respiratory chain. The immediate electron acceptor for the enzyme in this species is believed to be ubiquinone. Couples the redox reaction to proton translocation (for every two electrons transferred, four hydrogen ions are translocated across the cytoplasmic membrane), and thus conserves the redox energy in a proton gradient. This chain is NADH-quinone oxidoreductase subunit D, found in Helicobacter pylori (strain G27).